Consider the following 373-residue polypeptide: Putative F-box protein At1g76830 (373 aa).

Residues 4 to 49 form the F-box domain; the sequence is ITSFENLPEELKREILLRMSPNSLVTCSRVSKKLASMIRTKSFKEL.

This is Putative F-box protein At1g76830 from Arabidopsis thaliana (Mouse-ear cress).